A 188-amino-acid chain; its full sequence is GTPase KRas (188 aa).

Residues Gly-10–Ala-18, Val-29–Thr-35, Ala-59–Gly-60, and Asn-116–Asp-119 contribute to the GTP site. The short motif at Tyr-32–Tyr-40 is the Effector region element. Positions Lys-167 to Met-188 are disordered. The residue at position 185 (Cys-185) is a Cysteine methyl ester. Cys-185 carries S-farnesyl cysteine lipidation. Residues Ile-186–Met-188 constitute a propeptide, removed in mature form.

This sequence belongs to the small GTPase superfamily. Ras family.

The protein localises to the cell membrane. Its subcellular location is the cytoplasm. It carries out the reaction GTP + H2O = GDP + phosphate + H(+). Its activity is regulated as follows. Alternates between an inactive form bound to GDP and an active form bound to GTP. Activated by a guanine nucleotide-exchange factor (GEF) and inactivated by a GTPase-activating protein (GAP). Ras proteins bind GDP/GTP and possess intrinsic GTPase activity. Plays an important role in the regulation of cell proliferation. May play a role in promoting oncogenic events by inducing transcriptional silencing of tumor suppressor genes (TSGs). The sequence is that of GTPase KRas (kras) from Kryptolebias marmoratus (Mangrove killifish).